We begin with the raw amino-acid sequence, 461 residues long: Cysteine--tRNA ligase (461 aa).

Cys-28 lines the Zn(2+) pocket. Residues 30 to 40 carry the 'HIGH' region motif; that stretch reads ITVYDLCHIGH. The Zn(2+) site is built by Cys-209, His-234, and Glu-238. The 'KMSKS' region signature appears at 266–270; it reads KMSKS. ATP is bound at residue Lys-269.

It belongs to the class-I aminoacyl-tRNA synthetase family. In terms of assembly, monomer. Zn(2+) serves as cofactor.

The protein resides in the cytoplasm. It carries out the reaction tRNA(Cys) + L-cysteine + ATP = L-cysteinyl-tRNA(Cys) + AMP + diphosphate. This chain is Cysteine--tRNA ligase, found in Salmonella arizonae (strain ATCC BAA-731 / CDC346-86 / RSK2980).